The chain runs to 563 residues: Cytidine monophosphate-N-acetylneuraminic acid hydroxylase (563 aa).

One can recognise a Rieske domain in the interval 10–108 (LSPAETANLK…VEMDGNDGLF (99 aa)). The [2Fe-2S] cluster site is built by cysteine 50, histidine 52, cysteine 71, and histidine 74.

This sequence belongs to the CMP-Neu5Ac hydroxylase family. It depends on [2Fe-2S] cluster as a cofactor.

Its subcellular location is the cytoplasm. The catalysed reaction is CMP-N-acetyl-beta-neuraminate + 2 Fe(II)-[cytochrome b5] + O2 + 2 H(+) = CMP-N-glycoloyl-beta-neuraminate + 2 Fe(III)-[cytochrome b5] + H2O. The protein operates within amino-sugar metabolism; N-acetylneuraminate metabolism. In terms of biological role, sialic acids are components of carbohydrate chains of glycoconjugates and are involved in cell-cell recognition and cell-pathogen interactions. Catalyzes the conversion of CMP-N-acetylneuraminic acid (CMP-Neu5Ac) into its hydroxylated derivative CMP-N-glycolylneuraminic acid (CMP-Neu5Gc), a sialic acid abundantly expressed at the surface of many cells. In Cricetulus griseus (Chinese hamster), this protein is Cytidine monophosphate-N-acetylneuraminic acid hydroxylase (CMAH).